Consider the following 608-residue polypeptide: Chaperone protein HtpG (608 aa).

An a; substrate-binding region spans residues 1–332; sequence MQFQTEVNQL…VEDLPLNVSR (332 aa). Residues 333–536 form a b region; it reads EILQENQILK…KNKPDFAMQQ (204 aa). Residues 537 to 608 are c; sequence LLKQMGQEQN…LTKIINKAFS (72 aa).

The protein belongs to the heat shock protein 90 family. In terms of assembly, homodimer.

The protein localises to the cytoplasm. In terms of biological role, molecular chaperone. Has ATPase activity. The protein is Chaperone protein HtpG of Campylobacter jejuni subsp. jejuni serotype O:2 (strain ATCC 700819 / NCTC 11168).